A 341-amino-acid chain; its full sequence is Ketol-acid reductoisomerase (NADP(+)) (341 aa).

The 182-residue stretch at 1-182 (MTEMFYDDDA…GGTRAGVIKT (182 aa)) folds into the KARI N-terminal Rossmann domain. Residues 25-28 (YGSQ), K48, S51, S53, and 83-86 (DQHQ) contribute to the NADP(+) site. H108 is a catalytic residue. G134 lines the NADP(+) pocket. In terms of domain architecture, KARI C-terminal knotted spans 183–328 (TFTEETETDL…RELRSLFSWQ (146 aa)). Mg(2+) contacts are provided by D191, E195, E227, and E231. A substrate-binding site is contributed by S252.

This sequence belongs to the ketol-acid reductoisomerase family. Mg(2+) serves as cofactor.

The enzyme catalyses (2R)-2,3-dihydroxy-3-methylbutanoate + NADP(+) = (2S)-2-acetolactate + NADPH + H(+). It carries out the reaction (2R,3R)-2,3-dihydroxy-3-methylpentanoate + NADP(+) = (S)-2-ethyl-2-hydroxy-3-oxobutanoate + NADPH + H(+). It functions in the pathway amino-acid biosynthesis; L-isoleucine biosynthesis; L-isoleucine from 2-oxobutanoate: step 2/4. The protein operates within amino-acid biosynthesis; L-valine biosynthesis; L-valine from pyruvate: step 2/4. Functionally, involved in the biosynthesis of branched-chain amino acids (BCAA). Catalyzes an alkyl-migration followed by a ketol-acid reduction of (S)-2-acetolactate (S2AL) to yield (R)-2,3-dihydroxy-isovalerate. In the isomerase reaction, S2AL is rearranged via a Mg-dependent methyl migration to produce 3-hydroxy-3-methyl-2-ketobutyrate (HMKB). In the reductase reaction, this 2-ketoacid undergoes a metal-dependent reduction by NADPH to yield (R)-2,3-dihydroxy-isovalerate. This chain is Ketol-acid reductoisomerase (NADP(+)), found in Pseudarthrobacter chlorophenolicus (strain ATCC 700700 / DSM 12829 / CIP 107037 / JCM 12360 / KCTC 9906 / NCIMB 13794 / A6) (Arthrobacter chlorophenolicus).